The sequence spans 404 residues: Putative transporter AmpG 2 (404 aa).

The next 12 helical transmembrane spans lie at 11 to 31, 49 to 69, 84 to 104, 109 to 129, 154 to 174, 177 to 197, 224 to 244, 261 to 281, 294 to 311, 315 to 337, 353 to 373, and 378 to 398; these read IYNILFILFISLPGGLIYLLT, IGLFSLVNFIHIFKFLWGPLL, YCLIFSLLSCICCVYILTGFN, FISFSLCLIILAFFSSIYDML, FRIGILISGSGALYLSTIISW, VYRTMAILCVPSLLLIIFYPL, WLIIVGFMLLYRLQDNFLAVM, LGYKAFGMCATIAGGFIGGFL, VLVYHALSSITFLLLYSY, ITTLYIAVFLQEFTKGLTMSPFF, IALITSIAYISTVLFGSISGY, and LGWGYFFAIASFCFIPAYILI.

Belongs to the major facilitator superfamily.

Its subcellular location is the cell inner membrane. The protein is Putative transporter AmpG 2 (ampG2) of Rickettsia bellii (strain RML369-C).